Here is a 66-residue protein sequence, read N- to C-terminus: Ocellatin-PT3 (66 aa).

An N-terminal signal peptide occupies residues 1–22 (MAFLKKSLFLVLFLGLVSLSIC). Residues 23 to 39 (DEEKRQDEDDDDDDDEE) constitute a propeptide that is removed on maturation. Val66 carries the valine amide modification.

Expressed by the skin glands.

It localises to the secreted. Has antibacterial activity against Gram-negative bacterium E.coli ATCC 25922 (MIC=320 uM) but not against S.pneumoniae ATCC 700603, S.choleraesuis ATCC 14028 or Gram-positive bacterium S.aureus ATCC 29313. Shows no hemolytic activity and no cytotoxicity. This chain is Ocellatin-PT3, found in Leptodactylus pustulatus (Ceara white-lipped frog).